Here is a 464-residue protein sequence, read N- to C-terminus: MQHVPTIAIVGRPNVGKSAIFNRMAGRRIAIVHDEPGVTRDRLSAPCKITDRACKIMDTGGIGARLSDGFAEQVEAEADIAIKTADLILFVLDCRDHLTPIDQSIADHLRKSDIPVILLLNKADHEKQDLNLGEFAGLGFDDHIFLSAAHGRGFSELASRLDGFLKQKGAPLKEELEEEPENGEETALPIKVAVVGRPNAGKSSLVNAILRDRRTIVSNVAGTTRDAIDVPYLHDGQPYVLIDTAGMRPRSRRDTSVEVFSAMRSEKAIRRADICLLVIDIAAGITQQDRRIAGIIAEEGKPCIIIVNKFDLFHPNASRKDRMAEVEEQVRRELFFISYAPFIATSAKKAEGVEIIFKVITRIRRESHNLPTTGQLNRLIQLAQQMNPPGAASGSARRLKIYYATTAVDPKYNTIPVPRYVLFVNDKSLLTDSYSQYLRNKIREAYPAPGIPVIFSARSRVRND.

EngA-type G domains lie at 5 to 169 (PTIA…KQKG) and 190 to 368 (IKVA…RESH). GTP contacts are provided by residues 11–18 (GRPNVGKS), 58–62 (DTGGI), 121–124 (NKAD), 196–203 (GRPNAGKS), 243–247 (DTAGM), and 308–311 (NKFD). Positions 369–461 (NLPTTGQLNR…PVIFSARSRV (93 aa)) constitute a KH-like domain.

The protein belongs to the TRAFAC class TrmE-Era-EngA-EngB-Septin-like GTPase superfamily. EngA (Der) GTPase family. As to quaternary structure, associates with the 50S ribosomal subunit.

Its function is as follows. GTPase that plays an essential role in the late steps of ribosome biogenesis. The polypeptide is GTPase Der (Akkermansia muciniphila (strain ATCC BAA-835 / DSM 22959 / JCM 33894 / BCRC 81048 / CCUG 64013 / CIP 107961 / Muc)).